The primary structure comprises 677 residues: Methionine--tRNA ligase (677 aa).

The 'HIGH' region motif lies at 15–25 (PYANGSIHLGH). Residues Cys146, Cys149, Cys159, and Cys162 each coordinate Zn(2+). A 'KMSKS' region motif is present at residues 333–337 (KMSKS). Lys336 serves as a coordination point for ATP. The tRNA-binding domain maps to 575–677 (DFAKIDLRVA…DGAKPGQQVK (103 aa)).

Belongs to the class-I aminoacyl-tRNA synthetase family. MetG type 1 subfamily. As to quaternary structure, homodimer. Zn(2+) serves as cofactor.

The protein resides in the cytoplasm. The catalysed reaction is tRNA(Met) + L-methionine + ATP = L-methionyl-tRNA(Met) + AMP + diphosphate. Its function is as follows. Is required not only for elongation of protein synthesis but also for the initiation of all mRNA translation through initiator tRNA(fMet) aminoacylation. This chain is Methionine--tRNA ligase, found in Salmonella agona (strain SL483).